The chain runs to 1399 residues: FYVE, RhoGEF and PH domain-containing protein 6 (1399 aa).

6 disordered regions span residues 1–99 (MTSA…KDVR), 138–164 (MKEN…SEKC), 185–210 (LTQQ…NGDH), 235–281 (AHHN…DGIS), 299–341 (YTSK…NGSS), and 367–479 (PVDE…KKPQ). The span at 50-60 (PAIAPKPKVPT) shows a compositional bias: low complexity. The segment covering 259-276 (AESRGHTDSCEPENKRVA) has biased composition (basic and acidic residues). The span at 307 to 321 (KPRKTHAAARLRRQK) shows a compositional bias: basic residues. Composition is skewed to polar residues over residues 332–341 (EPGNSNNGSS) and 377–402 (RALT…QQTP). Positions 403–418 (SLDTDSSLTSDSSGSG) are enriched in low complexity. The span at 428–453 (TYTQCSTQPLSLPKQVTSACTDQPPA) shows a compositional bias: polar residues. Serine 494, serine 531, and serine 583 each carry phosphoserine. Positions 515-542 (RNYLHHPGPPNHGASASPFDMPNPTSEK) are disordered. Disordered regions lie at residues 631–650 (QHGD…GLES) and 657–678 (TGEE…SLES). Phosphoserine is present on residues serine 670 and serine 697. The disordered stretch occupies residues 768–840 (APDGQLQLDP…KQDEDAGMKS (73 aa)). Residues 802-817 (PSDEEVINSSDEDDVS) are compositionally biased toward acidic residues. Residues 821–838 (SKGEPDPLEDKQDEDAGM) show a composition bias toward basic and acidic residues. Residues 841-1030 (KVHHIAKEIM…IEVANHANDT (190 aa)) form the DH domain. Residues 1059 to 1153 (VFLKEGTLMK…WLEAISSSIE (95 aa)) form the PH 1 domain. At serine 1167 the chain carries Phosphoserine. The FYVE-type zinc finger occupies 1191 to 1250 (DTRATMCMICTSEFTLTWRRHHCRACGKIVCQACSSNKYGLDYLKGQLARVCEHCFQELQ). Residues cysteine 1197, cysteine 1200, cysteine 1213, cysteine 1216, cysteine 1221, cysteine 1224, cysteine 1242, and cysteine 1245 each coordinate Zn(2+). Residues 1302–1398 (DSTMSGYLYR…WIDAFQEGTV (97 aa)) enclose the PH 2 domain.

It is found in the cytoplasm. The protein localises to the cytoskeleton. May activate CDC42, a member of the Ras-like family of Rho- and Rac proteins, by exchanging bound GDP for free GTP. May play a role in regulating the actin cytoskeleton and cell shape. This is FYVE, RhoGEF and PH domain-containing protein 6 (Fgd6) from Mus musculus (Mouse).